A 201-amino-acid polypeptide reads, in one-letter code: Recombination protein RecR (201 aa).

The C4-type zinc-finger motif lies at 60–75; the sequence is CSRCGNVDTVDPCTVC. The Toprim domain occupies 83 to 178; sequence SVIIVVEDVS…KITRLAHGVP (96 aa).

This sequence belongs to the RecR family.

In terms of biological role, may play a role in DNA repair. It seems to be involved in an RecBC-independent recombinational process of DNA repair. It may act with RecF and RecO. This chain is Recombination protein RecR, found in Rhizobium etli (strain CIAT 652).